A 199-amino-acid chain; its full sequence is Adenine phosphoribosyltransferase (199 aa).

The protein belongs to the purine/pyrimidine phosphoribosyltransferase family. As to quaternary structure, homodimer.

The protein resides in the cytoplasm. The enzyme catalyses AMP + diphosphate = 5-phospho-alpha-D-ribose 1-diphosphate + adenine. The protein operates within purine metabolism; AMP biosynthesis via salvage pathway; AMP from adenine: step 1/1. Functionally, catalyzes a salvage reaction resulting in the formation of AMP, that is energically less costly than de novo synthesis. The chain is Adenine phosphoribosyltransferase from Rhodopseudomonas palustris (strain BisB18).